Here is a 557-residue protein sequence, read N- to C-terminus: Low affinity inorganic phosphate transporter 8 (557 aa).

The Cytoplasmic portion of the chain corresponds to 1–20 (MATSHGVLRSLDNAKTQSYH). Residues 21-41 (YLAIVIAGMGFFTDAYDLFCI) traverse the membrane as a helical segment. At 42 to 70 (TAVTKLIGRLYYSDPTNHSPGILPTNVNN) the chain is on the extracellular side. The helical transmembrane segment at 71 to 91 (AITGVALCGTLAGQLFFGWLG) threads the bilayer. At 92 to 98 (DKLGRKK) the chain is on the cytoplasmic side. A helical membrane pass occupies residues 99-119 (VYGITLTTMVGFALLSGLSFG). Topologically, residues 120–130 (STPKTVVTSLC) are extracellular. The chain crosses the membrane as a helical span at residues 131 to 151 (FFRFWLGFGIGGDYPLSAVIM). Over 152-162 (SEYANQKTRGS) the chain is Cytoplasmic. Residues 163-183 (FIAAVFAMQGVGILVAGGVAM) form a helical membrane-spanning segment. The Extracellular portion of the chain corresponds to 184 to 210 (FVSKLFLLYFPAPDFETDAVLSTQPEG). A helical transmembrane segment spans residues 211-231 (DFVWRIVLMFGAVPAALTYYW). Topologically, residues 232-294 (RMKMPETARY…LFSSEFLNRH (63 aa)) are cytoplasmic. The helical transmembrane segment at 295 to 315 (GLHLLGTTSTWFLLDIAFYSL) threads the bilayer. Topologically, residues 316 to 346 (QLTQKDIYPTSGLVYKASKMNAIEEVFQLSR) are extracellular. The chain crosses the membrane as a helical span at residues 347–367 (AMFAVALIATVPGYWCTVFLI). Residues 368–369 (EK) are Cytoplasmic-facing. The chain crosses the membrane as a helical span at residues 370 to 390 (IGRFRIQLIGFLVMSVCMWFL). Residues 391–414 (GHNYRSFRGEESACKNGSKYSFCN) are Extracellular-facing. N-linked (GlcNAc...) asparagine glycosylation is present at N406. Residues 415–435 (GNPVMFAILFGLTLFFANFGP) form a helical membrane-spanning segment. The Cytoplasmic segment spans residues 436–457 (NSTTFIVPAELFPARLRSTCHG). A helical membrane pass occupies residues 458-478 (ISAAAGKSGAIVGAFGVQSYI). Residues 479-490 (GNSHDKSKGTKQ) are Extracellular-facing. A helical transmembrane segment spans residues 491-511 (AIMALAVVNLLGFFFTFLVPE). Topologically, residues 512 to 557 (TQGRSLEEISGEEKDFQGNNADEEISGERNGTRNASVDKSPETSMV) are cytoplasmic. The segment at 519 to 557 (EISGEEKDFQGNNADEEISGERNGTRNASVDKSPETSMV) is disordered. Polar residues predominate over residues 543–557 (TRNASVDKSPETSMV).

The protein belongs to the major facilitator superfamily. Phosphate:H(+) symporter (TC 2.A.1.9) family.

The protein resides in the cell membrane. The enzyme catalyses phosphate(in) + H(+)(in) = phosphate(out) + H(+)(out). Low-affinity transporter for external inorganic phosphate (Pi) that may be involved in the acquisition of phosphate released by arbuscular mycorrhizal (AM) fungi (e.g. Glomus versiforme and G.intraradices) during AM symbiosis; not required for mycorrhizal arbuscule development. In Medicago truncatula (Barrel medic), this protein is Low affinity inorganic phosphate transporter 8.